Here is a 493-residue protein sequence, read N- to C-terminus: Probable cytochrome P450 508A2 (493 aa).

The chain crosses the membrane as a helical span at residues 1 to 21 (MIFGIIVYLFLIYILHNAYSK). Position 439 (Cys-439) interacts with heme.

It belongs to the cytochrome P450 family. Heme serves as cofactor.

It is found in the membrane. The protein is Probable cytochrome P450 508A2 (cyp508A2-1) of Dictyostelium discoideum (Social amoeba).